Here is a 202-residue protein sequence, read N- to C-terminus: Ribosome maturation factor RimP (202 aa).

Belongs to the RimP family.

The protein localises to the cytoplasm. Required for maturation of 30S ribosomal subunits. This Polaromonas naphthalenivorans (strain CJ2) protein is Ribosome maturation factor RimP.